We begin with the raw amino-acid sequence, 713 residues long: Ribosomal RNA large subunit methyltransferase K/L (713 aa).

The THUMP domain maps to 43-154 (LAYRITLWTR…NGVITIAMNF (112 aa)).

Belongs to the methyltransferase superfamily. RlmKL family.

It is found in the cytoplasm. It carries out the reaction guanosine(2445) in 23S rRNA + S-adenosyl-L-methionine = N(2)-methylguanosine(2445) in 23S rRNA + S-adenosyl-L-homocysteine + H(+). The catalysed reaction is guanosine(2069) in 23S rRNA + S-adenosyl-L-methionine = N(2)-methylguanosine(2069) in 23S rRNA + S-adenosyl-L-homocysteine + H(+). In terms of biological role, specifically methylates the guanine in position 2445 (m2G2445) and the guanine in position 2069 (m7G2069) of 23S rRNA. The protein is Ribosomal RNA large subunit methyltransferase K/L of Shewanella sp. (strain MR-7).